The sequence spans 833 residues: P protein (833 aa).

The Cytoplasmic portion of the chain corresponds to 1–172 (MRLENKDIRL…QVSKLGCCVR (172 aa)). Residues 173–193 (WIKITGLFVFVVLCSILFSLY) traverse the membrane as a helical segment. Residues 194–325 (PDQGKFWQLL…QFLGASVEAQ (132 aa)) lie on the Extracellular side of the membrane. N-linked (GlcNAc...) asparagine glycosylation is found at asparagine 210, asparagine 214, and asparagine 269. The helical transmembrane segment at 326-346 (VASAVAILAGVYTLIIFEIVH) threads the bilayer. The Cytoplasmic portion of the chain corresponds to 347–348 (RT). A helical membrane pass occupies residues 349–369 (LAAMLGALAALAALAVVGDRP). Residues 370 to 381 (SLTHVVEWIDFE) are Extracellular-facing. A helical transmembrane segment spans residues 382-402 (TLALLFGMMILVAVFSETGFF). Residues 403 to 417 (DYCAVKAYQLSRGRV) are Cytoplasmic-facing. A helical transmembrane segment spans residues 418 to 438 (WAMIFMLCLMAAILSAFLDNV). Residues 439-501 (TTMLLFTPVT…ELRKMGLDFA (63 aa)) lie on the Extracellular side of the membrane. Residues 502–522 (GFTAHMFLGICLVLLVSFPLL) form a helical membrane-spanning segment. Residues 523 to 617 (RLLYWNKKLY…RKHRISDRSL (95 aa)) lie on the Cytoplasmic side of the membrane. A helical transmembrane segment spans residues 618–638 (LVKCLTVLGFVISMFFLNSFV). Position 639 (proline 639) is a topological domain, extracellular. A helical transmembrane segment spans residues 640–660 (GIHLDLGWIAILGAIWLLILA). Over 661–675 (DIHDFEIILHRVEWA) the chain is Cytoplasmic. Residues 676-696 (TLLFFAALFVLMEALTHLHLV) form a helical membrane-spanning segment. Residues 697 to 718 (EYVGEQTALLIKMVPEDQRFAA) lie on the Extracellular side of the membrane. The helical transmembrane segment at 719–739 (AIVLIVWVSALASSLIDNIPF) threads the bilayer. The Cytoplasmic segment spans residues 740 to 759 (TATMIPVLLNLSQDPEISLP). A helical transmembrane segment spans residues 760-780 (ALPLMYALALGACLGGNGTLI). The Extracellular portion of the chain corresponds to 781–810 (GASTNVVCAGIAEKHGYGFSFMEFFRLGFP). The chain crosses the membrane as a helical span at residues 811-831 (VMLMSCTIGMCYLLIAHIVVG). The Cytoplasmic portion of the chain corresponds to 832 to 833 (WN).

This sequence belongs to the CitM (TC 2.A.11) transporter family. Most abundant in melanocytes. Also present in neonatal and adult eye tissue presumably as a result of expression in the retinal pigmented epithelium and choroid body, known sites of melanogenesis in the eye. Small but detectable amounts also observed in fetal, neonatal and adult brain. Moderate amounts detected in adult testis and ovary. Not detected in heart, kidney, spleen, liver or thymus.

The protein resides in the melanosome membrane. The catalysed reaction is chloride(in) = chloride(out). Functionally, contributes to a melanosome-specific anion (chloride) current that modulates melanosomal pH for optimal tyrosinase activity required for melanogenesis and the melanosome maturation. One of the components of the mammalian pigmentary system. May serve as a key control point at which color variation is determined. Major determinant of eye color. Seems to regulate the post-translational processing of tyrosinase, which catalyzes the limiting reaction in melanin synthesis. This is P protein (Oca2) from Mus musculus (Mouse).